The primary structure comprises 406 residues: Acetamidase (406 aa).

The segment covering 387 to 399 (CRPRSSTSTSPRR) has biased composition (low complexity). The segment at 387 to 406 (CRPRSSTSTSPRRQGPAEGR) is disordered.

Belongs to the acetamidase/formamidase family.

The enzyme catalyses a monocarboxylic acid amide + H2O = a monocarboxylate + NH4(+). The catalysed reaction is acetamide + H2O = acetate + NH4(+). Its function is as follows. Allows acetamide to be used as a sole carbon or nitrogen source. In Mycolicibacterium smegmatis (Mycobacterium smegmatis), this protein is Acetamidase (amdA).